Consider the following 266-residue polypeptide: Urease accessory protein UreD (266 aa).

The protein belongs to the UreD family. As to quaternary structure, ureD, UreF and UreG form a complex that acts as a GTP-hydrolysis-dependent molecular chaperone, activating the urease apoprotein by helping to assemble the nickel containing metallocenter of UreC. The UreE protein probably delivers the nickel.

The protein localises to the cytoplasm. In terms of biological role, required for maturation of urease via the functional incorporation of the urease nickel metallocenter. In Jannaschia sp. (strain CCS1), this protein is Urease accessory protein UreD.